The sequence spans 228 residues: Ribose-5-phosphate isomerase A (228 aa).

Substrate is bound by residues 27 to 30 (TGTT), 86 to 89 (DGAD), and 100 to 103 (KGMG). The active-site Proton acceptor is glutamate 109. Lysine 127 serves as a coordination point for substrate.

This sequence belongs to the ribose 5-phosphate isomerase family. As to quaternary structure, homodimer.

The enzyme catalyses aldehydo-D-ribose 5-phosphate = D-ribulose 5-phosphate. The protein operates within carbohydrate degradation; pentose phosphate pathway; D-ribose 5-phosphate from D-ribulose 5-phosphate (non-oxidative stage): step 1/1. In terms of biological role, catalyzes the reversible conversion of ribose-5-phosphate to ribulose 5-phosphate. This is Ribose-5-phosphate isomerase A from Borreliella burgdorferi (strain ZS7) (Borrelia burgdorferi).